A 489-amino-acid chain; its full sequence is Betaine aldehyde dehydrogenase (489 aa).

Positions 26 and 93 each coordinate K(+). Glycine 150–tryptophan 152 contributes to the NAD(+) binding site. Catalysis depends on lysine 162, which acts as the Charge relay system. Lysine 176 to glutamate 179 serves as a coordination point for NAD(+). Valine 180 serves as a coordination point for K(+). Residue glycine 229–threonine 232 participates in NAD(+) binding. Leucine 245 is a binding site for K(+). Glutamate 251 acts as the Proton acceptor in catalysis. NAD(+)-binding residues include glycine 253, cysteine 285, and glutamate 386. Residue cysteine 285 is the Nucleophile of the active site. Cysteine 285 carries the post-translational modification Cysteine sulfenic acid (-SOH). Positions 456 and 459 each coordinate K(+). Catalysis depends on glutamate 463, which acts as the Charge relay system.

The protein belongs to the aldehyde dehydrogenase family. As to quaternary structure, dimer of dimers. The cofactor is K(+).

It catalyses the reaction betaine aldehyde + NAD(+) + H2O = glycine betaine + NADH + 2 H(+). It functions in the pathway amine and polyamine biosynthesis; betaine biosynthesis via choline pathway; betaine from betaine aldehyde: step 1/1. In terms of biological role, involved in the biosynthesis of the osmoprotectant glycine betaine. Catalyzes the irreversible oxidation of betaine aldehyde to the corresponding acid. The protein is Betaine aldehyde dehydrogenase of Burkholderia orbicola (strain MC0-3).